Reading from the N-terminus, the 886-residue chain is DNA double-strand break repair Rad50 ATPase (886 aa).

Residues R13, 33–39 (NGAGKSS), and Q128 each bind ATP. 2 coiled-coil regions span residues 183–360 (EQIK…LLET) and 400–433 (KEIT…LKSA). The Zinc-hook domain maps to 392–489 (LSKAKEEEKE…RLEKVEKALE (98 aa)). Residues C437 and C440 each contribute to the Zn(2+) site. Coiled-coil stretches lie at residues 489–518 (EKQE…DAEK) and 545–713 (SSAS…KKVE). Position 792–797 (792–797 (FLSGGE)) interacts with ATP.

The protein belongs to the SMC family. RAD50 subfamily. Homodimer. Forms a heterotetramer composed of two Mre11 subunits and two Rad50 subunits. It depends on Zn(2+) as a cofactor.

Part of the Rad50/Mre11 complex, which is involved in the early steps of DNA double-strand break (DSB) repair. The complex may facilitate opening of the processed DNA ends to aid in the recruitment of HerA and NurA. Rad50 controls the balance between DNA end bridging and DNA resection via ATP-dependent structural rearrangements of the Rad50/Mre11 complex. This Archaeoglobus fulgidus (strain ATCC 49558 / DSM 4304 / JCM 9628 / NBRC 100126 / VC-16) protein is DNA double-strand break repair Rad50 ATPase.